A 201-amino-acid chain; its full sequence is L-rhamnose-binding lectin SML (201 aa).

8 disulfide bridges follow: C10–C40, C20–C99, C54–C86, C67–C73, C108–C138, C117–C195, C152–C182, and C163–C169. SUEL-type lectin domains lie at 18–100 (LSCD…YNCF) and 107–196 (TCEH…YVCQ). N-linked (GlcNAc...) asparagine glycosylation is present at N168.

Homodimer; non-covalently linked.

Its function is as follows. Rhamnose-binding lectin. Also binds melibiose, raffinose, D-galactose, L-arabinose, D-fucose, maltose and D-glucose with decreasing affinity. Does not bind D-arabinose, L-fucose, lactose, xylose or 2-deoxy-D-galactose. Shows strong hemagglutinating activity against rabbit erythrocytes. The sequence is that of L-rhamnose-binding lectin SML from Scomberomorus niphonius (Japanese Spanish mackerel).